A 286-amino-acid polypeptide reads, in one-letter code: 33 kDa chaperonin (286 aa).

Disulfide bonds link cysteine 225/cysteine 227 and cysteine 258/cysteine 261.

It belongs to the HSP33 family. In terms of processing, under oxidizing conditions two disulfide bonds are formed involving the reactive cysteines. Under reducing conditions zinc is bound to the reactive cysteines and the protein is inactive.

Its subcellular location is the cytoplasm. Functionally, redox regulated molecular chaperone. Protects both thermally unfolding and oxidatively damaged proteins from irreversible aggregation. Plays an important role in the bacterial defense system toward oxidative stress. The sequence is that of 33 kDa chaperonin from Shewanella sediminis (strain HAW-EB3).